Here is a 647-residue protein sequence, read N- to C-terminus: Auxin efflux carrier component 2 (647 aa).

At 1–7 (MITGKDM) the chain is on the extracellular side. A helical membrane pass occupies residues 8 to 28 (YDVLAAMVPLYVAMILAYGSV). Residues 29–38 (RWWGIFTPDQ) are Cytoplasmic-facing. A helical membrane pass occupies residues 39-59 (CSGINRFVAVFAVPLLSFHFI). Position 51 (Val-51) interacts with (indol-3-yl)acetate. The Extracellular portion of the chain corresponds to 60-68 (SSNDPYAMN). The helical transmembrane segment at 69–89 (YHFLAADSLQKVVILAALFLW) threads the bilayer. Over 90 to 100 (QAFSRRGSLEW) the chain is Cytoplasmic. The chain crosses the membrane as a helical span at residues 101–121 (MITLFSLSTLPNTLVMGIPLL). 2 residues coordinate (indol-3-yl)acetate: Asn-112 and Leu-114. Over 122–131 (RAMYGDFSGN) the chain is Extracellular. Residues 132-152 (LMVQIVVLQSIIWYTLMLFLF) traverse the membrane as a helical segment. Position 145 (Tyr-145) interacts with (indol-3-yl)acetate. At 153-507 (EFRGAKLLIS…LIRNPNTYSS (355 aa)) the chain is on the cytoplasmic side. Phosphoserine occurs at positions 237, 258, and 310. Residues 339–380 (SVPSYPPPNPMFTGSTSGASGVKKKESGGGGSGGGVGVGGQN) are disordered. Thr-354 carries the post-translational modification Phosphothreonine. The segment covering 366 to 378 (GGGGSGGGVGVGG) has biased composition (gly residues). Ser-393 carries the phosphoserine modification. Disordered regions lie at residues 397-420 (EANA…KVSI) and 440-481 (PGRK…QQMP). A helical transmembrane segment spans residues 508-528 (LFGLAWSLVSFKWNIKMPTIM). Over 529 to 531 (SGS) the chain is Extracellular. A helical transmembrane segment spans residues 532-552 (ISILSDAGLGMAMFSLGLFMA). Residues 553–568 (LQPKIIACGKSVAGFA) are Cytoplasmic-facing. A helical membrane pass occupies residues 569 to 589 (MAVRFLTGPAVIAATSIAIGI). Topologically, residues 590 to 592 (RGD) are extracellular. The helical transmembrane segment at 593 to 613 (LLHIAIVQAALPQGIVPFVFA) threads the bilayer. Ile-607 and Val-608 together coordinate (indol-3-yl)acetate. Topologically, residues 614–626 (KEYNVHPDILSTA) are cytoplasmic. Residues 627–647 (VIFGMLVALPVTVLYYVLLGL) form a helical membrane-spanning segment.

The protein belongs to the auxin efflux carrier (TC 2.A.69.1) family. As to quaternary structure, homodimer. Interacts with FYPP1 and FYPP3. Component of a complex made of PINs (e.g. PIN1 and PIN2), MAB4/MELs (e.g. NPY1/MAB4 and NPY5/MEL1) and AGC kinases (e.g. D6PK and PID) at the plasma membrane. Binds directly to NPY1/MAB4, NPY5/MEL1 and PID. In terms of tissue distribution, root-specific. Localized to the cortex, epidermis and lateral root cap, predominantly at the upper side of cells.

The protein resides in the cell membrane. In terms of biological role, acts as a component of the auxin efflux carrier. Seems to be involved in the root-specific auxin transport, and mediates the root gravitropism. Its particular localization suggests a role in the translocation of auxin towards the elongation zone. Recrutes NPY proteins (e.g. NPY1/MAB4 and NPY5/MEL1) to the plasma membrane in a polar basal localization in root epidermis; this activity is optimized by AGC kinases-mediated (e.g. D6PK and PID) phosphorylation that limits their lateral diffusion-based escape. The sequence is that of Auxin efflux carrier component 2 from Arabidopsis thaliana (Mouse-ear cress).